A 244-amino-acid chain; its full sequence is ATP synthase subunit a (244 aa).

A run of 7 helical transmembrane segments spans residues 20–40 (FFDI…VIVI), 81–101 (GILF…LNVM), 113–133 (QLLV…IWGF), 140–160 (FLNI…LVFI), 176–196 (LFAN…AAIY), 202–222 (FIGI…LGIA), and 223–243 (FLQA…IINL).

This sequence belongs to the ATPase A chain family. F-type ATPases have 2 components, CF(1) - the catalytic core - and CF(0) - the membrane proton channel. CF(1) has five subunits: alpha(3), beta(3), gamma(1), delta(1), epsilon(1). CF(0) has three main subunits: a, b and c.

It is found in the mitochondrion inner membrane. In terms of biological role, mitochondrial membrane ATP synthase (F(1)F(0) ATP synthase or Complex V) produces ATP from ADP in the presence of a proton gradient across the membrane which is generated by electron transport complexes of the respiratory chain. F-type ATPases consist of two structural domains, F(1) - containing the extramembraneous catalytic core and F(0) - containing the membrane proton channel, linked together by a central stalk and a peripheral stalk. During catalysis, ATP synthesis in the catalytic domain of F(1) is coupled via a rotary mechanism of the central stalk subunits to proton translocation. Key component of the proton channel; it may play a direct role in the translocation of protons across the membrane. This Dictyostelium discoideum (Social amoeba) protein is ATP synthase subunit a (atp6).